Here is a 1098-residue protein sequence, read N- to C-terminus: WD repeat-containing protein 72 (1098 aa).

WD repeat units lie at residues 15–54, 60–102, 158–196, 315–359, 399–438, 456–501, 504–549, and 552–591; these read APPH…KISA, GHSA…CVEK, WINC…NSIQ, ENKN…VSKF, AGTA…KARL, GHHQ…ILHK, LEAG…CLLR, and KHLF…LERH. A phosphoserine mark is found at serine 1077 and serine 1079.

Its subcellular location is the cytoplasmic vesicle. Plays a major role in formation of tooth enamel. Specifically required during the maturation phase of amelogenesis for normal formation of the enamel matrix and clearance of enamel proteins. May be involved in localization of the calcium transporter SLC24A4 to the ameloblast cell membrane. This chain is WD repeat-containing protein 72 (WDR72), found in Pongo abelii (Sumatran orangutan).